A 306-amino-acid polypeptide reads, in one-letter code: UDP-3-O-acyl-N-acetylglucosamine deacetylase (306 aa).

Residues histidine 79, histidine 238, and aspartate 242 each coordinate Zn(2+). Histidine 265 acts as the Proton donor in catalysis.

It belongs to the LpxC family. The cofactor is Zn(2+).

It carries out the reaction a UDP-3-O-[(3R)-3-hydroxyacyl]-N-acetyl-alpha-D-glucosamine + H2O = a UDP-3-O-[(3R)-3-hydroxyacyl]-alpha-D-glucosamine + acetate. It participates in glycolipid biosynthesis; lipid IV(A) biosynthesis; lipid IV(A) from (3R)-3-hydroxytetradecanoyl-[acyl-carrier-protein] and UDP-N-acetyl-alpha-D-glucosamine: step 2/6. In terms of biological role, catalyzes the hydrolysis of UDP-3-O-myristoyl-N-acetylglucosamine to form UDP-3-O-myristoylglucosamine and acetate, the committed step in lipid A biosynthesis. The protein is UDP-3-O-acyl-N-acetylglucosamine deacetylase of Idiomarina loihiensis (strain ATCC BAA-735 / DSM 15497 / L2-TR).